The chain runs to 150 residues: Urease accessory protein UreE (150 aa).

Belongs to the UreE family.

It localises to the cytoplasm. Its function is as follows. Involved in urease metallocenter assembly. Binds nickel. Probably functions as a nickel donor during metallocenter assembly. The sequence is that of Urease accessory protein UreE from Staphylococcus saprophyticus subsp. saprophyticus (strain ATCC 15305 / DSM 20229 / NCIMB 8711 / NCTC 7292 / S-41).